The primary structure comprises 827 residues: Periplasmic nitrate reductase (827 aa).

The segment at residues 1-32 (MELNRRDFMKANAAAAAALAAGITLPVKNVYA) is a signal peptide (tat-type signal). Residues 37 to 93 (IKWDKAPCRFCGTGCSVLVGTQNGRMVASQGDPDAEVNRGLNCIKGYFLPKIIYGKD) enclose the 4Fe-4S Mo/W bis-MGD-type domain. Residues cysteine 44, cysteine 47, cysteine 51, and cysteine 79 each coordinate [4Fe-4S] cluster. Residues lysine 81, glutamine 148, asparagine 173, cysteine 177, 210 to 217 (WGSNMAEM), 241 to 245 (STFEH), methionine 371, glutamine 375, asparagine 481, 507 to 508 (SD), lysine 530, aspartate 557, and 717 to 726 (TGRVLEHWHS) each bind Mo-bis(molybdopterin guanine dinucleotide). Phenylalanine 793 is a binding site for substrate. Residues asparagine 801 and lysine 818 each coordinate Mo-bis(molybdopterin guanine dinucleotide).

Belongs to the prokaryotic molybdopterin-containing oxidoreductase family. NasA/NapA/NarB subfamily. Component of the periplasmic nitrate reductase NapAB complex composed of NapA and NapB. Requires [4Fe-4S] cluster as cofactor. It depends on Mo-bis(molybdopterin guanine dinucleotide) as a cofactor. Post-translationally, predicted to be exported by the Tat system. The position of the signal peptide cleavage has not been experimentally proven.

The protein resides in the periplasm. The catalysed reaction is 2 Fe(II)-[cytochrome] + nitrate + 2 H(+) = 2 Fe(III)-[cytochrome] + nitrite + H2O. Functionally, catalytic subunit of the periplasmic nitrate reductase complex NapAB. Receives electrons from NapB and catalyzes the reduction of nitrate to nitrite. This is Periplasmic nitrate reductase from Glaesserella parasuis serovar 5 (strain SH0165) (Haemophilus parasuis).